The chain runs to 237 residues: Ribonuclease PH (237 aa).

Residues Arg-86 and 124–126 each bind phosphate; that span reads GTR.

The protein belongs to the RNase PH family. As to quaternary structure, homohexameric ring arranged as a trimer of dimers.

It carries out the reaction tRNA(n+1) + phosphate = tRNA(n) + a ribonucleoside 5'-diphosphate. Phosphorolytic 3'-5' exoribonuclease that plays an important role in tRNA 3'-end maturation. Removes nucleotide residues following the 3'-CCA terminus of tRNAs; can also add nucleotides to the ends of RNA molecules by using nucleoside diphosphates as substrates, but this may not be physiologically important. Probably plays a role in initiation of 16S rRNA degradation (leading to ribosome degradation) during starvation. This is Ribonuclease PH from Bradyrhizobium sp. (strain ORS 278).